The primary structure comprises 426 residues: Putative phosphate permease CT_962 (426 aa).

A run of 11 helical transmembrane segments spans residues 1 to 21 (MWLL…NIGA), 37 to 57 (LTLK…AVLL), 83 to 103 (VFGM…ASFC), 104 to 124 (GWPV…GIIL), 140 to 160 (VSWL…FSFI), 183 to 203 (AIII…APVI), 207 to 227 (PALR…IWGI), 260 to 280 (LIVE…MSFA), 309 to 329 (VLLV…ATWG), 365 to 385 (LGFP…IGFA), and 399 to 419 (IVLS…VFFL).

Belongs to the inorganic phosphate transporter (PiT) (TC 2.A.20) family.

It is found in the cell membrane. Potential transporter for phosphate. The polypeptide is Putative phosphate permease CT_962 (Chlamydia trachomatis serovar D (strain ATCC VR-885 / DSM 19411 / UW-3/Cx)).